The following is a 215-amino-acid chain: Glycerol-3-phosphate acyltransferase (215 aa).

Transmembrane regions (helical) follow at residues 14–34 (SSSA…AVVV), 63–83 (TAAA…LWLA), 92–112 (WGAY…PLFL), 128–148 (MAIE…VAVF), and 154–174 (LAAL…SGAA).

Belongs to the PlsY family. Probably interacts with PlsX.

The protein resides in the cell inner membrane. The catalysed reaction is an acyl phosphate + sn-glycerol 3-phosphate = a 1-acyl-sn-glycero-3-phosphate + phosphate. Its pathway is lipid metabolism; phospholipid metabolism. Its function is as follows. Catalyzes the transfer of an acyl group from acyl-phosphate (acyl-PO(4)) to glycerol-3-phosphate (G3P) to form lysophosphatidic acid (LPA). This enzyme utilizes acyl-phosphate as fatty acyl donor, but not acyl-CoA or acyl-ACP. The sequence is that of Glycerol-3-phosphate acyltransferase from Bordetella bronchiseptica (strain ATCC BAA-588 / NCTC 13252 / RB50) (Alcaligenes bronchisepticus).